We begin with the raw amino-acid sequence, 232 residues long: Ribonuclease 3 (232 aa).

The 130-residue stretch at 5–134 (QTVLKNHFEI…FLGALLLDKD (130 aa)) folds into the RNase III domain. Position 47 (Glu-47) interacts with Mg(2+). Residue Asp-51 is part of the active site. Residues Asp-120 and Glu-123 each contribute to the Mg(2+) site. Residue Glu-123 is part of the active site. A DRBM domain is found at 160 to 229 (DYKTHLQELL…AKNAVEKGLD (70 aa)).

The protein belongs to the ribonuclease III family. In terms of assembly, homodimer. Requires Mg(2+) as cofactor.

It localises to the cytoplasm. It catalyses the reaction Endonucleolytic cleavage to 5'-phosphomonoester.. Digests double-stranded RNA. Involved in the processing of primary rRNA transcript to yield the immediate precursors to the large and small rRNAs (23S and 16S). Processes some mRNAs, and tRNAs when they are encoded in the rRNA operon. Processes pre-crRNA and tracrRNA of type II CRISPR loci if present in the organism. This chain is Ribonuclease 3, found in Streptococcus pneumoniae (strain ATCC BAA-255 / R6).